The following is a 239-amino-acid chain: ATP-dependent dethiobiotin synthetase BioD (239 aa).

Residue 15-20 (EIGKTF) coordinates ATP. Residue Thr-19 coordinates Mg(2+). Lys-40 is an active-site residue. ATP contacts are provided by residues Asp-57, 118–121 (EGVG), and 178–179 (NH). 2 residues coordinate Mg(2+): Asp-57 and Glu-118.

It belongs to the dethiobiotin synthetase family. In terms of assembly, homodimer. Requires Mg(2+) as cofactor.

Its subcellular location is the cytoplasm. The catalysed reaction is (7R,8S)-7,8-diammoniononanoate + CO2 + ATP = (4R,5S)-dethiobiotin + ADP + phosphate + 3 H(+). It functions in the pathway cofactor biosynthesis; biotin biosynthesis; biotin from 7,8-diaminononanoate: step 1/2. In terms of biological role, catalyzes a mechanistically unusual reaction, the ATP-dependent insertion of CO2 between the N7 and N8 nitrogen atoms of 7,8-diaminopelargonic acid (DAPA, also called 7,8-diammoniononanoate) to form a ureido ring. The sequence is that of ATP-dependent dethiobiotin synthetase BioD from Burkholderia cenocepacia (strain ATCC BAA-245 / DSM 16553 / LMG 16656 / NCTC 13227 / J2315 / CF5610) (Burkholderia cepacia (strain J2315)).